A 96-amino-acid chain; its full sequence is Venom protein 3.1 (96 aa).

A signal peptide spans 1-25 (MKFSLISVFLFAVFLSNENIFQAIA). Residues 45-84 (EAVMSSSLTNEEESRNWPHRATRNTLEKGQKRSPAARSEI) form a disordered region.

It belongs to the non-disulfide-bridged peptide (NDBP) superfamily. Expressed by the venom gland.

Its subcellular location is the secreted. This is Venom protein 3.1 from Lychas mucronatus (Chinese swimming scorpion).